A 256-amino-acid polypeptide reads, in one-letter code: Gamma carbonic anhydrase-like 2, mitochondrial (256 aa).

Residues 1–33 (MATSLARISKRSITSAVSSNLIRRYFAAEAVAV) constitute a mitochondrion transit peptide. Substrate-binding positions include 103–105 (RGD) and 118–119 (QE). His124 lines the Zn(2+) pocket. Substrate-binding residues include Arg152, Gln164, and Tyr231.

This sequence belongs to the gamma-class carbonic anhydrase family. Component of the mitochondrial oxidoreductase respiratory chain complex I; element of the extra matrix-exposed domain, which is attached to the membrane arm of this complex. Interacts with GAMMACA2.

The protein resides in the mitochondrion membrane. In terms of biological role, involved in complex I assembly in mitochondria and respiration. In Arabidopsis thaliana (Mouse-ear cress), this protein is Gamma carbonic anhydrase-like 2, mitochondrial (GAMMACAL2).